The chain runs to 181 residues: MMLQHPGQVSASEVSATAIVPCLSPPGSLVFEDFANLTPFVKEELRFAIQNKHLCHRMSSALESVTINNRPLEMSVTKSEVAPEEDERKRRRRERNKIAAAKCRNKKKEKTECLQKESEKLESVNAELKAQIEELKNEKQHLIYMLNLHRPTCIVRAQNGRTPEDERNLFIQQIKEGTLQS.

A disordered region spans residues 76–96 (VTKSEVAPEEDERKRRRRERN). Lysine 78 is covalently cross-linked (Glycyl lysine isopeptide (Lys-Gly) (interchain with G-Cter in SUMO2)). Positions 86–149 (DERKRRRRER…QHLIYMLNLH (64 aa)) constitute a bZIP domain. Residues 88–110 (RKRRRRERNKIAAAKCRNKKKEK) are basic motif. The segment at 114–142 (LQKESEKLESVNAELKAQIEELKNEKQHL) is leucine-zipper. At threonine 162 the chain carries Phosphothreonine. A Glycyl lysine isopeptide (Lys-Gly) (interchain with G-Cter in SUMO2) cross-link involves residue lysine 175.

The protein belongs to the bZIP family. ATF subfamily. ATF3 alone can bind DNA, but it preferentially forms heteromeric complexes with JUN and JUNB and does not interact with FOS. In terms of tissue distribution, expressed in tissues containing skeletal muscle or smooth muscle. Expressed in cutaneous and muscular sensory neurons.

It is found in the nucleus. In terms of biological role, this protein binds the cAMP response element (CRE) (consensus: 5'-GTGACGT[AC][AG]-3'), a sequence present in many viral and cellular promoters. Represses transcription from promoters with ATF sites. It may repress transcription by stabilizing the binding of inhibitory cofactors at the promoter. The polypeptide is Cyclic AMP-dependent transcription factor ATF-3 (Atf3) (Rattus norvegicus (Rat)).